The following is a 413-amino-acid chain: Palmitoyltransferase ZDHHC6 (413 aa).

Topologically, residues methionine 1–proline 24 are cytoplasmic. A helical transmembrane segment spans residues isoleucine 25–tryptophan 45. The Lumenal portion of the chain corresponds to tyrosine 46 to asparagine 57. A helical transmembrane segment spans residues phenylalanine 58–alanine 78. Residues glycine 79–serine 143 are Cytoplasmic-facing. The region spanning glutamine 99–leucine 149 is the DHHC domain. The active-site S-palmitoyl cysteine intermediate is cysteine 129. A helical transmembrane segment spans residues phenylalanine 144–methionine 164. The Lumenal segment spans residues threonine 165 to proline 194. The chain crosses the membrane as a helical span at residues isoleucine 195–glycine 215. Topologically, residues threonine 216–arginine 413 are cytoplasmic. Positions valine 313–cysteine 398 constitute an SH3 domain. 3 S-palmitoyl cysteine lipidation sites follow: cysteine 328, cysteine 329, and cysteine 343. The Di-lysine motif motif lies at lysine 410–arginine 413.

This sequence belongs to the DHHC palmitoyltransferase family. As to quaternary structure, homooligomerizes. Interacts with SELENOK. Palmitoylated at 3 different sites by ZDHHC16. The combination of the different palmitoylation events strongly affects the quaternary assembly of ZDHHC6, its localization, stability and function. Palmitoylation at Cys-328 accelerates the turnover of ZDHHC6. Depalmitoylated by LYPLA2.

The protein localises to the endoplasmic reticulum membrane. The enzyme catalyses L-cysteinyl-[protein] + hexadecanoyl-CoA = S-hexadecanoyl-L-cysteinyl-[protein] + CoA. It carries out the reaction L-cysteinyl-[protein] + octadecanoyl-CoA = S-octadecanoyl-L-cysteinyl-[protein] + CoA. Its function is as follows. Endoplasmic reticulum palmitoyl acyltransferase that mediates palmitoylation of proteins such as AMFR, CALX, ITPR1 and TFRC. Palmitoylates calnexin (CALX), which is required for its association with the ribosome-translocon complex and efficient folding of glycosylated proteins. Mediates palmitoylation of AMFR, promoting AMFR distribution to the peripheral endoplasmic reticulum. Together with SELENOK, palmitoylates ITPR1 in immune cells, leading to regulate ITPR1 stability and function. Stearoyltransferase that mediates stearoylation of TFRC to inhibit TFRC-mediated activation of the JNK pathway and mitochondrial fragmentation. The protein is Palmitoyltransferase ZDHHC6 of Mus musculus (Mouse).